The chain runs to 259 residues: Nodulation protein J (259 aa).

The ABC transmembrane type-2 domain maps to alanine 30–arginine 256. Helical transmembrane passes span isoleucine 32–valine 52, alanine 64–isoleucine 84, alanine 116–leucine 136, tryptophan 141–leucine 161, tyrosine 174–phenylalanine 194, and isoleucine 228–valine 248.

This sequence belongs to the ABC-2 integral membrane protein family. Lipooligosaccharide exporter (TC 3.A.1.102) subfamily. The complex is composed of two ATP-binding proteins (NodI) and two transmembrane proteins (NodJ).

Its subcellular location is the cell inner membrane. Functionally, part of the ABC transporter complex NodIJ involved in the export of the nodulation factors (Nod factors), the bacterial signal molecules that induce symbiosis and subsequent nodulation induction. Nod factors are LCO (lipo-chitin oligosaccharide), a modified beta-1,4-linked N-acetylglucosamine oligosaccharide. This subunit encodes the transporter. In Rhizobium leguminosarum bv. viciae, this protein is Nodulation protein J (nodJ).